The chain runs to 315 residues: Putative glycosyltransferase ORF315 (315 aa).

Belongs to the glycosyltransferase group 1 family. Glycosyltransferase 4 subfamily.

In Acidianus convivator (ABV), this protein is Putative glycosyltransferase ORF315.